The sequence spans 602 residues: GTP-binding protein 2 (602 aa).

Residues 18 to 64 form a disordered region; sequence GPAMGGNLKARGAGGSSSCGGPKGKKKNGRNRGGKANNPPYLPPEAE. The segment covering 29-39 has biased composition (gly residues); sequence GAGGSSSCGGP. Basic residues predominate over residues 40 to 50; sequence KGKKKNGRNRG. A tr-type G domain is found at 170 to 398; it reads FLDLRVAVLG…LNILPPLTNS (229 aa). Residues 179-186, 260-264, and 316-319 contribute to the GTP site; these read GNVDSGKS, DLAGH, and SKVD.

The protein belongs to the TRAFAC class translation factor GTPase superfamily. Classic translation factor GTPase family. GTPBP1 subfamily. As to expression, predominantly expressed in thymus, spleen, and testis. Expressed at lower levels in brain, heart, lung, kidney, and skeletal muscle. In testis, specifically expressed in spermatocytes and round spermatids.

The chain is GTP-binding protein 2 from Mus musculus (Mouse).